A 140-amino-acid chain; its full sequence is Large ribosomal subunit protein bL17 (140 aa).

A disordered region spans residues 119–140; it reads DTTAKGQDSGPVQVEEQENEEA.

This sequence belongs to the bacterial ribosomal protein bL17 family. As to quaternary structure, part of the 50S ribosomal subunit. Contacts protein L32.

This is Large ribosomal subunit protein bL17 from Zymomonas mobilis subsp. mobilis (strain ATCC 31821 / ZM4 / CP4).